Here is a 444-residue protein sequence, read N- to C-terminus: 4-O-dimethylallyl-L-tyrosine synthase (444 aa).

It belongs to the tryptophan dimethylallyltransferase family. In terms of assembly, homodimer.

The catalysed reaction is L-tyrosine + dimethylallyl diphosphate = 4-O-dimethylallyl-L-tyrosine + diphosphate. In terms of biological role, 4-O-dimethylallyl-L-tyrosine synthase; part of the gene cluster that mediates the biosynthesis of an unusual class of epipolythiodioxopiperazines (ETPs) lacking the reactive thiol group important for toxicity. Firstly, L-tyrosine is prenylated by tcpD, before undergoing condensation with L-glycine in a reaction catalyzed by the NRPS tcpP leading to the diketopiperazine (DKP) backbone. Afterwards the alpha-carbon of tyrosine is oxidized by the cytochrome P450 tcpC to form a hydroxyl group. However, in contrast other ETP biosynthesis pathways studied so far, tcpC is not able to bishydroxylate the DKP at both alpha-carbon positions, but hydroxylates the alpha-carbon of the tyrosine part and the nitrogen of the glycine part. The next steps involve an alpha,beta-elimination reaction catalyzed by tcpI, a methylation by the methyltransferase tcpN the action of the four enzyme cascade tcpG/K/J/I. Due to a dysfunctional cytochrome P450 monooxygenase tcpC, the pathway leads to the biosynthesis of probable non-toxic metabolites lacking the reactive thiol group. The polypeptide is 4-O-dimethylallyl-L-tyrosine synthase (Claviceps purpurea (strain 20.1) (Ergot fungus)).